Reading from the N-terminus, the 117-residue chain is Colipase (117 aa).

Residues 1–22 (MNIFNILLPIVVLLLVFGLTAA) form the signal peptide. Intrachain disulfides connect C39–C50, C45–C61, C49–C83, C71–C91, and C85–C109.

It belongs to the colipase family. In terms of assembly, forms a 1:1 stoichiometric complex with pancreatic lipase.

It localises to the secreted. Its function is as follows. Colipase is a cofactor of pancreatic lipase. It allows the lipase to anchor itself to the lipid-water interface. Without colipase the enzyme is washed off by bile salts, which have an inhibitory effect on the lipase. The protein is Colipase (clps) of Xenopus tropicalis (Western clawed frog).